The following is a 454-amino-acid chain: DNA-binding protein (454 aa).

Positions 1–41 (MSHKKVVAISESSSDEEVPVAPPTAPPKKRQRKAVEEPRGH) are disordered. Tyrosine 129 carries the phosphotyrosine; by host modification. Zn(2+) is bound by residues cysteine 213 and histidine 215. A flexible loop region spans residues 226-260 (VEMDVNSENAQRALKENPEKTKIVSNRWGRNVVQF). Zn(2+) is bound by residues cysteine 268, cysteine 284, cysteine 325, cysteine 327, cysteine 378, and cysteine 394. Residues 440–454 (TILPQGQHDDDLVLF) are C-terminal arm, DBP binding.

This sequence belongs to the adenoviridae E2A DNA-binding protein family. Homomultimerizes on viral ssDNA bound to pTP. Forms a initiation complex with viral polymerase, pTP and hosts NFIA and POU2F1/OCT1. Interacts with host SRCAP.

It is found in the host nucleus. Functionally, plays a role in the elongation phase of viral strand displacement replication by unwinding the template in an ATP-independent fashion, employing its capacity to form multimers. Also enhances the rate of initiation. Released from template upon second strand synthesis. Assembles in complex with viral pTP, viral pol, host NFIA and host POU2F1/OCT1 on viral origin of replication. Covers the whole ssDNA genome during synthesis. The complementary strand synthesis induces its relese from DNA template. May inhibit cellular transcription mediated by the interaction between host SRCAP and CBP. In Canine adenovirus serotype 1 (strain RI261) (CAdV-1), this protein is DNA-binding protein.